A 99-amino-acid chain; its full sequence is DNA-binding protein Fis (99 aa).

Residues Gln-75–Lys-94 constitute a DNA-binding region (H-T-H motif).

The protein belongs to the transcriptional regulatory Fis family. In terms of assembly, homodimer.

Its function is as follows. Activates ribosomal RNA transcription. Plays a direct role in upstream activation of rRNA promoters. This Buchnera aphidicola subsp. Schizaphis graminum (strain Sg) protein is DNA-binding protein Fis.